A 250-amino-acid polypeptide reads, in one-letter code: Petrobactin import ATP-binding protein FatE (250 aa).

Residues 2 to 236 (IKIDNVKKFY…TLLTDIFETR (235 aa)) enclose the ABC transporter domain. Position 34–41 (34–41 (GPNGAGKS)) interacts with ATP.

Belongs to the ABC transporter superfamily. The complex is composed of two ATP-binding proteins (FatE), two transmembrane proteins (FatC and FatD) and a solute-binding protein (FpuA).

It is found in the cell membrane. It catalyses the reaction a Fe(III)-siderophore(out) + ATP + H2O = a Fe(III)-siderophore(in) + ADP + phosphate + H(+). Functionally, part of an ABC transporter complex involved in ferric-petrobactin uptake. Probably responsible for energy coupling to the transport system. This Bacillus anthracis protein is Petrobactin import ATP-binding protein FatE.